The sequence spans 34 residues: Trypsin inhibitor 1 (34 aa).

Residues 1-34 constitute a cross-link (cyclopeptide (Ser-Gly)); sequence SGSDGGVCPKILQRCRRDSDCPGACICRGNGYCG. 3 disulfides stabilise this stretch: C8-C25, C15-C27, and C21-C33.

This is a cyclic peptide.

Its subcellular location is the secreted. Functionally, inhibits trypsin; probably participates in a plant defense mechanism. The polypeptide is Trypsin inhibitor 1 (Momordica cochinchinensis (Spiny bitter cucumber)).